We begin with the raw amino-acid sequence, 1239 residues long: MGDPKEAGAEASPSGAAARGGLSLLSQADSEEPSAQGSALFLGGNEVKSRAVVKYSSAPPRTAFARLEEKTDLKLPPANWLRESAKLGPAGTTILGNSKKSKPFSSFGMAYDFIDSVGNDVDVVSDSENIKKLLKIPYSKSHVSMAVHRIGRTLLLDELDIQELFMRSSQTGDWTWLKEFYQRLIDQKWQRKKKSKEHWYQKAILSKFLYYSINGDGAAQPVPSPAEQEESSSSQQTHESEGAAWPAPFEMPSSVSEDPSASSQGREPLEPSCIVGHVASAPKEQNLTTLFNDGENSQGLKNDFVRNILWTFEDIHMLVGSNMPIFGGGRYPAVSLRLRDNNKPINVLTGIDYWLDNLICNVPELVMCFHVNGIVQKYEMIKTEEIPNLENSNFSTKVIKDIAQNILSFLKSNCTKEGHTYWLFKASGSDIVKLYDLTTLCEETEDKYQNPFTMPVAILLYKVACNMMMKKNQNKKHYGTIRTLLLNCVKLLDKSRHPQIIASANYMLSELFQLDEPKKEESSDSPLNENSDESYSEEEEEMADSDENGSYSTSSDPADDNKAVAIIKSVGELSVPEKYKSIHQIRPSCAFPVCHDTEERCRLVLSYVLEGLKSVDSSIKKESDLPAADPSTPIPLKYEDESTRGGPEGLEKQMALFLDKMGSIQKGSCSGQSGMTPGSWQHKMKLQLILKSSKAYYILSDAAMSLQKYGRALRYIKLALQSHDTYCCLCTNMLSEVLLFLSQYLTLCGDIQLMLAQNANNRAAHLEEFNYQTKEDQEILHSLHRESSCQGFAWATDLSTDLESQLSVSCKCYEAANEILQFSDLKSQNPEHYVQVLKRMGNIRNEIGVFYMNQAAALQGERVVSKSVSAAEQQLWKKSFSCFEKGIHNFESIDDATNAALLLCNTGRLMRVCAQAHCGAEDEFKREFSPEEGLYYSKAVDYYLKALRSLGTRDMHPIVWDSVNWELSTTYFTMATLQQDYAPLSRKAQEQIEKEVSEAMMKSLKHCDVDSATARQPLCQYRAATIHHRLASMYHSCLRNQVGDEHLRKQHRVLADLHYSKAAKLFQLLKDAPCELLRVQLERVAFAEFQMSSQNSNVGKLKTLSGALDIMVRTEHAFQLIRKELVEECDQPKNDEATPAADSSPNLNREEVIKLLSIFESRLSFLLLQSIKLMSSSKRKMSSNAEEDIVLQTNKQIYSQLLRATANRNSTLLERIEVVICLLEQLASGSSRSSGSAVP.

4 disordered regions span residues 1 to 39, 219 to 269, 517 to 559, and 620 to 646; these read MGDP…QGSA, AQPV…REPL, PKKE…DPAD, and KKES…TRGG. Low complexity-rich tracts occupy residues 9 to 28 and 253 to 263; these read AEAS…LSQA and SSVSEDPSASS. The segment covering 530-547 has biased composition (acidic residues); it reads NSDESYSEEEEEMADSDE. 2 TPR repeats span residues 693–726 and 914–953; these read SKAY…HDTY and AQAH…LGTR.

It is found in the nucleus. Transcription factor involved in erythroid differentiation. Involved in transcriptional activation of the globin gene. This Mus musculus (Mouse) protein is Erythroid differentiation-related factor 1 (Edrf1).